We begin with the raw amino-acid sequence, 539 residues long: CTP synthase (539 aa).

Residues 1 to 268 (MSFKSIFLTG…SDFLLNKLGF (268 aa)) form an amidoligase domain region. Serine 14 provides a ligand contact to CTP. Position 14 (serine 14) interacts with UTP. 15 to 20 (SLGKGL) lines the ATP pocket. L-glutamine is bound at residue tyrosine 55. ATP is bound at residue aspartate 72. Mg(2+) contacts are provided by aspartate 72 and glutamate 142. CTP contacts are provided by residues 149–151 (DIE), 188–193 (KTKPTQ), and lysine 224. UTP is bound by residues 188 to 193 (KTKPTQ) and lysine 224. Residues 294–532 (RIGLVGKYLE…IRAAKAYSLE (239 aa)) enclose the Glutamine amidotransferase type-1 domain. Glycine 353 contributes to the L-glutamine binding site. The active-site Nucleophile; for glutamine hydrolysis is cysteine 380. Residues 381-384 (LGMQ), glutamate 404, and arginine 460 contribute to the L-glutamine site. Catalysis depends on residues histidine 505 and glutamate 507.

It belongs to the CTP synthase family. In terms of assembly, homotetramer.

The catalysed reaction is UTP + L-glutamine + ATP + H2O = CTP + L-glutamate + ADP + phosphate + 2 H(+). It catalyses the reaction L-glutamine + H2O = L-glutamate + NH4(+). The enzyme catalyses UTP + NH4(+) + ATP = CTP + ADP + phosphate + 2 H(+). It participates in pyrimidine metabolism; CTP biosynthesis via de novo pathway; CTP from UDP: step 2/2. Its activity is regulated as follows. Allosterically activated by GTP, when glutamine is the substrate; GTP has no effect on the reaction when ammonia is the substrate. The allosteric effector GTP functions by stabilizing the protein conformation that binds the tetrahedral intermediate(s) formed during glutamine hydrolysis. Inhibited by the product CTP, via allosteric rather than competitive inhibition. In terms of biological role, catalyzes the ATP-dependent amination of UTP to CTP with either L-glutamine or ammonia as the source of nitrogen. Regulates intracellular CTP levels through interactions with the four ribonucleotide triphosphates. The protein is CTP synthase of Chlamydia trachomatis serovar L2 (strain ATCC VR-902B / DSM 19102 / 434/Bu).